The sequence spans 697 residues: Polyribonucleotide nucleotidyltransferase (697 aa).

Residues Asp-488 and Asp-494 each contribute to the Mg(2+) site. The KH domain maps to 555 to 614; that stretch reads PTFEVITINPDKIRDVIGKGGATIRQITEETKAAIDIEDNGTVRVFGETKAAAKAAIAKI. In terms of domain architecture, S1 motif spans 624-692; it reads GKIYDGKVIR…NRGRIKLTMK (69 aa).

It belongs to the polyribonucleotide nucleotidyltransferase family. Component of the RNA degradosome, which is a multiprotein complex involved in RNA processing and mRNA degradation. Requires Mg(2+) as cofactor.

The protein resides in the cytoplasm. The enzyme catalyses RNA(n+1) + phosphate = RNA(n) + a ribonucleoside 5'-diphosphate. Functionally, involved in mRNA degradation. Catalyzes the phosphorolysis of single-stranded polyribonucleotides processively in the 3'- to 5'-direction. This chain is Polyribonucleotide nucleotidyltransferase, found in Acinetobacter baumannii (strain AB307-0294).